The sequence spans 235 residues: Large ribosomal subunit protein uL1 (235 aa).

It belongs to the universal ribosomal protein uL1 family. As to quaternary structure, part of the 50S ribosomal subunit.

In terms of biological role, binds directly to 23S rRNA. The L1 stalk is quite mobile in the ribosome, and is involved in E site tRNA release. Protein L1 is also a translational repressor protein, it controls the translation of the L11 operon by binding to its mRNA. The polypeptide is Large ribosomal subunit protein uL1 (Synechococcus sp. (strain WH7803)).